The following is a 155-amino-acid chain: Protein-export protein SecB (155 aa).

The protein belongs to the SecB family. As to quaternary structure, homotetramer, a dimer of dimers. One homotetramer interacts with 1 SecA dimer.

Its subcellular location is the cytoplasm. One of the proteins required for the normal export of preproteins out of the cell cytoplasm. It is a molecular chaperone that binds to a subset of precursor proteins, maintaining them in a translocation-competent state. It also specifically binds to its receptor SecA. The protein is Protein-export protein SecB of Cronobacter sakazakii (strain ATCC BAA-894) (Enterobacter sakazakii).